The sequence spans 112 residues: MYB-like transcription factor ETC2 (112 aa).

Residues 41-78 (TEQEEDLISRMYRLVGNRWDLIAGRVVGRKANEIERYW) enclose the Myb-like domain.

Interacts with GL3. In terms of tissue distribution, expressed in stomatal guard mother cells, young stomata and trichomes of young leaves, and inflorescences.

Its subcellular location is the nucleus. Functionally, MYB-type transcription factor involved in epidermal cell fate specification. Acts as a negative regulator of trichome development, by mediating lateral inhibition. Promotes the formation of hair developing cells in H position in root epidermis, probably by inhibiting non-hair cell formation. The chain is MYB-like transcription factor ETC2 (ETC2) from Arabidopsis thaliana (Mouse-ear cress).